Here is a 531-residue protein sequence, read N- to C-terminus: 4-hydroxyphenylacetaldehyde oxime monooxygenase (531 aa).

Residues 18–38 (WQTCLLVLLPVLLVSYYLLTS) traverse the membrane as a helical segment. Positions 122, 151, 466, and 468 each coordinate heme b.

This sequence belongs to the cytochrome P450 family. It depends on heme b as a cofactor.

The protein resides in the endoplasmic reticulum membrane. The catalysed reaction is (E)-4-hydroxyphenylacetaldehyde oxime + reduced [NADPH--hemoprotein reductase] + O2 = (S)-4-hydroxymandelonitrile + oxidized [NADPH--hemoprotein reductase] + 2 H2O + H(+). The enzyme catalyses (E)-4-hydroxyphenylacetaldehyde oxime = (Z)-(4-hydroxyphenyl)acetaldehyde oxime. It catalyses the reaction (Z)-(4-hydroxyphenyl)acetaldehyde oxime = 4-hydroxyphenylacetonitrile + H2O. It carries out the reaction 4-hydroxyphenylacetonitrile + reduced [NADPH--hemoprotein reductase] + O2 = (S)-4-hydroxymandelonitrile + oxidized [NADPH--hemoprotein reductase] + H2O + H(+). Its pathway is secondary metabolite biosynthesis; dhurrin biosynthesis; dhurrin from L-tyrosine: step 2/3. In terms of biological role, cytochrome P450 involved in the biosynthesis of the cyanogenic glucoside dhurrin. Catalyzes the conversion of p-hydroxyphenylacetaldoxime to p-hydroxymandelonitrile via three different and successive activities: isomerization of the (E) isomer to the (Z) isomer of p-hydroxyphenylacetaldoxime, followed by dehydration of the oxime to the corresponding nitrile, and C-hydroxylation of the nitrile to produce p-hydroxymandelonitrile. This is 4-hydroxyphenylacetaldehyde oxime monooxygenase from Sorghum bicolor (Sorghum).